The chain runs to 176 residues: Translation initiation factor IF-3 (176 aa).

This sequence belongs to the IF-3 family. In terms of assembly, monomer.

It is found in the cytoplasm. Functionally, IF-3 binds to the 30S ribosomal subunit and shifts the equilibrium between 70S ribosomes and their 50S and 30S subunits in favor of the free subunits, thus enhancing the availability of 30S subunits on which protein synthesis initiation begins. The sequence is that of Translation initiation factor IF-3 from Streptococcus pyogenes serotype M4 (strain MGAS10750).